Here is a 106-residue protein sequence, read N- to C-terminus: Large ribosomal subunit protein bL31B (106 aa).

The segment at proline 85–lysine 106 is disordered. The segment covering lysine 95–lysine 106 has biased composition (basic residues).

The protein belongs to the bacterial ribosomal protein bL31 family. Type B subfamily. Part of the 50S ribosomal subunit.

The chain is Large ribosomal subunit protein bL31B from Chlamydia felis (strain Fe/C-56) (Chlamydophila felis).